Consider the following 220-residue polypeptide: A-type ATP synthase subunit K (220 aa).

6 helical membrane passes run Leu5–Ile25, Phe63–Ala83, Leu90–Ala110, Leu125–Phe145, Ala155–Ile175, and Leu195–Ile215.

It belongs to the V-ATPase proteolipid subunit family. In terms of assembly, the A-type ATPase is composed of subunits A(3), B(3), C, D, E(1 or 2), F, H(2), I and K(x). Subunit K dimerizes and may form higher oligomers.

It localises to the cell membrane. In terms of biological role, component of the A-type ATP synthase that produces ATP from ADP in the presence of a proton gradient across the membrane. This is A-type ATP synthase subunit K from Methanocaldococcus jannaschii (strain ATCC 43067 / DSM 2661 / JAL-1 / JCM 10045 / NBRC 100440) (Methanococcus jannaschii).